A 167-amino-acid chain; its full sequence is Signal peptidase complex subunit 3A (167 aa).

Residues 1–11 are Cytoplasmic-facing; the sequence is MHTFGYRANAL. A helical; Signal-anchor for type II membrane protein membrane pass occupies residues 12-32; sequence LTFAVTALAFICAIASFSDKF. At 33 to 167 the chain is on the lumenal side; that stretch reads SNQNPSAEIQ…PGYSLPDAYR (135 aa). Residue asparagine 136 is glycosylated (N-linked (GlcNAc...) asparagine).

This sequence belongs to the SPCS3 family. In terms of assembly, component of the signal peptidase complex (SPC) composed of a catalytic subunit SEC11 and three accessory subunits SPCS1, SPCS2 and SPCS3. The complex induces a local thinning of the ER membrane which is used to measure the length of the signal peptide (SP) h-region of protein substrates. This ensures the selectivity of the complex towards h-regions shorter than 18-20 amino acids.

The protein localises to the endoplasmic reticulum membrane. In terms of biological role, essential component of the signal peptidase complex (SPC) which catalyzes the cleavage of N-terminal signal sequences from nascent proteins as they are translocated into the lumen of the endoplasmic reticulum. Essential for the SPC catalytic activity, possibly by stabilizing and positioning the active center of the complex close to the lumenal surface. In Arabidopsis thaliana (Mouse-ear cress), this protein is Signal peptidase complex subunit 3A.